An 89-amino-acid chain; its full sequence is Large ribosomal subunit protein bL27 (89 aa).

The tract at residues 1–20 is disordered; it reads MAHKKAGGSSRNGRDSAGRR.

Belongs to the bacterial ribosomal protein bL27 family.

The polypeptide is Large ribosomal subunit protein bL27 (Rhizorhabdus wittichii (strain DSM 6014 / CCUG 31198 / JCM 15750 / NBRC 105917 / EY 4224 / RW1) (Sphingomonas wittichii)).